A 128-amino-acid polypeptide reads, in one-letter code: Transcription antitermination protein NusB (128 aa).

Belongs to the NusB family.

Functionally, involved in transcription antitermination. Required for transcription of ribosomal RNA (rRNA) genes. Binds specifically to the boxA antiterminator sequence of the ribosomal RNA (rrn) operons. The chain is Transcription antitermination protein NusB from Listeria monocytogenes serotype 4a (strain HCC23).